The chain runs to 880 residues: Leucine--tRNA ligase (880 aa).

The 'HIGH' region motif lies at 49-59 (PYPSGRIHMGH). The 'KMSKS' region motif lies at 638 to 642 (KMSKS). K641 lines the ATP pocket.

Belongs to the class-I aminoacyl-tRNA synthetase family.

The protein resides in the cytoplasm. The catalysed reaction is tRNA(Leu) + L-leucine + ATP = L-leucyl-tRNA(Leu) + AMP + diphosphate. The polypeptide is Leucine--tRNA ligase (Bartonella quintana (strain Toulouse) (Rochalimaea quintana)).